Consider the following 176-residue polypeptide: Ribonuclease mitogillin (176 aa).

An N-terminal signal peptide occupies residues 1-27 (MVAIKNLFLLAATAVSVLAAPSPLDAR). Intrachain disulfides connect Cys-32–Cys-174 and Cys-102–Cys-158. Residue His-76 is part of the active site. The active-site Proton acceptor is the Glu-122. His-163 serves as the catalytic Proton donor.

This sequence belongs to the ribonuclease U2 family.

It is found in the secreted. This purine-specific ribonuclease cleaves 28S RNA in eukaryotic ribosomes, inhibits protein synthesis, and shows antitumor activity. The polypeptide is Ribonuclease mitogillin (mitF) (Aspergillus fumigatus (strain ATCC MYA-4609 / CBS 101355 / FGSC A1100 / Af293) (Neosartorya fumigata)).